Consider the following 542-residue polypeptide: Prolyl 3-hydroxylase OGFOD1 (542 aa).

Positions 134–239 (DLESTIDMSC…RLSISGWFHG (106 aa)) constitute a Fe2OG dioxygenase domain. His-155 and Asp-157 together coordinate Fe cation. A 2-oxoglutarate-binding site is contributed by Tyr-169. His-218 is a binding site for Fe cation. Arg-230 serves as a coordination point for 2-oxoglutarate. Positions 373 to 435 (EDEMNDKKEA…TKKESSVPTC (63 aa)) are disordered. Positions 400–416 (ENNQTAISNNSQQSNEQ) are enriched in polar residues.

This sequence belongs to the TPA1 family. In terms of assembly, monomer. It depends on Fe(2+) as a cofactor. The cofactor is L-ascorbate.

The protein localises to the cytoplasm. The protein resides in the nucleus. The enzyme catalyses [ribosomal protein uS12]-L-proline + 2-oxoglutarate + O2 = [ribosomal protein uS12]-(3S)-3-hydroxy-L-proline + succinate + CO2. Prolyl 3-hydroxylase that catalyzes 3-hydroxylation of 'Pro-62' of small ribosomal subunit uS12 (RPS23), thereby regulating protein translation termination efficiency. Involved in stress granule formation. In Pongo abelii (Sumatran orangutan), this protein is Prolyl 3-hydroxylase OGFOD1 (OGFOD1).